The sequence spans 954 residues: MPRKKEQASKSENEKQTSNVQAQDFKTAIQPDTATAQLIKTYSNPKQRGDKGEIVYDGGQSSKLAEVVDQTTEPHNADGAVKDGRIAPVKLDLEKQKLDKLKLFEASPFDPLTVKNNQDVVDKLYATQSSSIQEVVPTKTFATELQFGVTSEDMAKIYGAVVAVSKNVNSSVTYEVKRGTHELIKVPTIPHNLVLIQSDNGKHALIKEDLGQWPVETGVSLVNQAGVFAVQLANKLGIDKPFVLDAGSNYFTDTSFIDTRKYCTDGLSPREIQKALNRQRAYYDRPELTIAENRTLLSQSIVYPDVDGNDVSVIFSGAMSHAIFTYAQSQWSKNIIRLDDYIREITLTVPKHYRPRRFKEIEHTHGYVYRELNQGSLLPLVDANLKEASSYYFKKLMPSISNVPVDARTLQSATSALAADTGLVDRAPHVSMLTNRLTTANASSVRAITVLTCMFKQFRIGMTYSPDPNIMDVAAATCMLLFRPAQSISDEQYRYCLQTMAVFLTNTTYDIVNNDTVDVLKTKLRNQGWPLVERYNAIEVDMSVEPLRSPGQVGRYYNPFNIDPLTKKHVEDRLEEFPNQVQVGRFRNVSNNAVGAALAAFLRACRDKTSANWKGYSILVSRYRSLIPNELFESLRNISGEYNINPQDEHSFFFALAQINADEEFTGVIDKESAEYLDEYATLAREISNSLTLVKAAFGPLERTSGSILNHANNLNKVINRVFADKPLISETMLKILTIDGTTGKDGYRNWLDKLVGHNYPVYVEPVVNIVNFISARFIADSSYFGYTNEIMIMPNHITVPVDDRFGFRDSPFCMSLPRTIMGNEVRRISYSVFSMMEDIDEVISEGFILYDAYFNFTYDIMTTDGVTRLKEDILVVTDTGNDIKPIHFYIYFENKNDKKLRYESKMNVNYRLYIKTPACLLPLNDYMRAQHEYVSPSSSRVYIKDPAVVYTRS.

The segment covering 1 to 15 (MPRKKEQASKSENEK) has biased composition (basic and acidic residues). The disordered stretch occupies residues 1–29 (MPRKKEQASKSENEKQTSNVQAQDFKTAI). Polar residues predominate over residues 16–29 (QTSNVQAQDFKTAI).

It is found in the virion. Its function is as follows. Self-assembles to form an icosahedral capsid with a pseudo T=2 symmetry, about 60 nm in diameter, and consisting of 120 VP2 subunits. In Banna virus (BAV), this protein is Major inner capsid protein VP2 (Segment-2).